The sequence spans 452 residues: Trigger factor (452 aa).

The PPIase FKBP-type domain maps to 171–256; that stretch reads GDRVTLAFKG…ATLIEAPQDA (86 aa).

This sequence belongs to the FKBP-type PPIase family. Tig subfamily.

It localises to the cytoplasm. It catalyses the reaction [protein]-peptidylproline (omega=180) = [protein]-peptidylproline (omega=0). In terms of biological role, involved in protein export. Acts as a chaperone by maintaining the newly synthesized protein in an open conformation. Functions as a peptidyl-prolyl cis-trans isomerase. The chain is Trigger factor from Afipia carboxidovorans (strain ATCC 49405 / DSM 1227 / KCTC 32145 / OM5) (Oligotropha carboxidovorans).